Consider the following 373-residue polypeptide: Alanine racemase (373 aa).

The Proton acceptor; specific for D-alanine role is filled by K40. Position 40 is an N6-(pyridoxal phosphate)lysine (K40). Substrate is bound at residue R140. Y268 serves as the catalytic Proton acceptor; specific for L-alanine. Position 315 (M315) interacts with substrate.

Belongs to the alanine racemase family. It depends on pyridoxal 5'-phosphate as a cofactor.

The catalysed reaction is L-alanine = D-alanine. Its pathway is amino-acid biosynthesis; D-alanine biosynthesis; D-alanine from L-alanine: step 1/1. In terms of biological role, catalyzes the interconversion of L-alanine and D-alanine. May also act on other amino acids. The protein is Alanine racemase (alr) of Levilactobacillus brevis (strain ATCC 367 / BCRC 12310 / CIP 105137 / JCM 1170 / LMG 11437 / NCIMB 947 / NCTC 947) (Lactobacillus brevis).